A 124-amino-acid polypeptide reads, in one-letter code: Small ribosomal subunit protein uS13 (124 aa).

A compositionally biased stretch (basic residues) spans 92–117 (RRGLPVRGQRTKSNARTRKGPRKTVA). The segment at 92–124 (RRGLPVRGQRTKSNARTRKGPRKTVANKKIESK) is disordered.

The protein belongs to the universal ribosomal protein uS13 family. Part of the 30S ribosomal subunit. Forms a loose heterodimer with protein S19. Forms two bridges to the 50S subunit in the 70S ribosome.

Located at the top of the head of the 30S subunit, it contacts several helices of the 16S rRNA. In the 70S ribosome it contacts the 23S rRNA (bridge B1a) and protein L5 of the 50S subunit (bridge B1b), connecting the 2 subunits; these bridges are implicated in subunit movement. Contacts the tRNAs in the A and P-sites. This chain is Small ribosomal subunit protein uS13, found in Mycoplasmoides gallisepticum (strain R(low / passage 15 / clone 2)) (Mycoplasma gallisepticum).